A 136-amino-acid polypeptide reads, in one-letter code: Large ribosomal subunit protein uL16 (136 aa).

This sequence belongs to the universal ribosomal protein uL16 family. In terms of assembly, part of the 50S ribosomal subunit.

Functionally, binds 23S rRNA and is also seen to make contacts with the A and possibly P site tRNAs. The sequence is that of Large ribosomal subunit protein uL16 from Aliivibrio salmonicida (strain LFI1238) (Vibrio salmonicida (strain LFI1238)).